The following is a 120-amino-acid chain: Anti-adapter protein IraM (120 aa).

This sequence belongs to the IraM/RssC family.

Its subcellular location is the cytoplasm. Functionally, involved in the stabilization of the sigma stress factor RpoS. The sequence is that of Anti-adapter protein IraM from Salmonella choleraesuis (strain SC-B67).